Reading from the N-terminus, the 110-residue chain is MSDLRKTLASLSSAEDFLKFLNIEYDETVVHINRLHILKRFHDYLKREGNTDALDDRALQALYVKLLSQSYQDFVVSDAVSEKVFKVFHQAMGVSHVSLEKVAVSARKGR.

It belongs to the NifW family. Homotrimer; associates with NifD.

May protect the nitrogenase Fe-Mo protein from oxidative damage. This Acidithiobacillus ferrooxidans (strain ATCC 23270 / DSM 14882 / CIP 104768 / NCIMB 8455) (Ferrobacillus ferrooxidans (strain ATCC 23270)) protein is Nitrogenase-stabilizing/protective protein NifW.